Consider the following 1155-residue polypeptide: uncharacterized protein (1155 aa).

The first 19 residues, 1–19, serve as a signal peptide directing secretion; the sequence is MNKNIFITLLISSLLLLSG. The N-palmitoyl cysteine moiety is linked to residue C20. The S-diacylglycerol cysteine moiety is linked to residue C20. 4 consecutive transmembrane segments (helical) span residues 291–311, 395–415, 424–444, and 459–479; these read VSAILTLYIMFTGFSFLIGNI, LGFIYIILYLIALYFIFFLIF, ALITIGMIIIMGPIFICFMLF, and ISYALQPIILFAGIAFISMII.

The protein belongs to the TrbL/VirB6 family.

Its subcellular location is the cell membrane. This is an uncharacterized protein from Rickettsia felis (strain ATCC VR-1525 / URRWXCal2) (Rickettsia azadi).